The sequence spans 225 residues: mRNA-decapping protein D10 (225 aa).

The 184-residue stretch at 35-218 folds into the Nudix hydrolase domain; sequence AKYPLSVIGI…NVIKYIINAV (184 aa). A Nudix box motif is present at residues 116–137; sequence GKIKDLESITNCLVREIKEELN. Glu122 provides a ligand contact to Mg(2+). Catalysis depends on Glu131, which acts as the Nucleophile. Glu135 serves as a coordination point for Mn(2+). Residue Asp157 coordinates Mg(2+).

This sequence belongs to the Nudix hydrolase family. Mg(2+) serves as cofactor. It depends on Mn(2+) as a cofactor.

Decapping enzyme required for the removal of the 5'-end m7GpppN cap tethered to viral and host mRNAs to allow their decay in cells. May therefore accelerate viral and cellular mRNA turnover to eliminate competing host mRNAs and allow stage-specific synthesis of viral proteins. Acceleration of the turnover of cellular transcripts may even promote the shutoff of host protein synthesis. This Fowlpox virus (strain NVSL) (FPV) protein is mRNA-decapping protein D10.